The primary structure comprises 1108 residues: Valine--tRNA ligase, mitochondrial 1 (1108 aa).

The N-terminal 46 residues, 1-46 (MSLLFLRRAKPLFVSCCSATHSRSSFLSPTLTNQLVRSFHGSRTMS), are a transit peptide targeting the mitochondrion. A compositionally biased stretch (basic and acidic residues) spans 57 to 93 (ELERKKKKEEKAKEKELKKQKALEKERLAELKAKQAK). The interval 57-138 (ELERKKKKEE…RKRLSSQMAK (82 aa)) is disordered. The short motif at 177 to 187 (PNVTGALHIGH) is the 'HIGH' region element. The 'KMSKS' region signature appears at 695 to 699 (KMSKS). An ATP-binding site is contributed by Lys-698. Residues 1032-1064 (AINTEAEQEKIRNKIGELQKQKEKLQKMMSVST) are a coiled coil.

This sequence belongs to the class-I aminoacyl-tRNA synthetase family.

The protein localises to the mitochondrion. It localises to the cytoplasm. Its subcellular location is the cytosol. It carries out the reaction tRNA(Val) + L-valine + ATP = L-valyl-tRNA(Val) + AMP + diphosphate. Functionally, required for embryo development and seed viability. The polypeptide is Valine--tRNA ligase, mitochondrial 1 (Arabidopsis thaliana (Mouse-ear cress)).